A 349-amino-acid polypeptide reads, in one-letter code: MRVADFSFELPDSLIARHPLAERHGSRLLVLDGPSGELAHKQFTDLLEYLRPGDLMVFNNTRVIPARLFGQKASGGKLEVLVERVLDSHRVLAHVRASKAPKEGAQILIDGGGEAEMVARHDTLFELRFSEEVLPLLERVGHMPLPPYIDRPDEGADRERYQTVYAERAGAVAAPTAGLHFDEALLEKIAAKGVERAFVTLHVGAGTFQPVRVDKIEDHTMHKEWLEVSQDVVDAVAACRARGGRVIAVGTTSVRSLESAARDGVLKAFSGDTDIFIFPGRPFHVVDCLVTNFHLPESTLLMLVSAFAGYPETMAAYAAAVEQGYRFFSYGDAMFITRNPAPRGPEDQA.

This sequence belongs to the QueA family. In terms of assembly, monomer.

It localises to the cytoplasm. It carries out the reaction 7-aminomethyl-7-carbaguanosine(34) in tRNA + S-adenosyl-L-methionine = epoxyqueuosine(34) in tRNA + adenine + L-methionine + 2 H(+). It functions in the pathway tRNA modification; tRNA-queuosine biosynthesis. Transfers and isomerizes the ribose moiety from AdoMet to the 7-aminomethyl group of 7-deazaguanine (preQ1-tRNA) to give epoxyqueuosine (oQ-tRNA). This is S-adenosylmethionine:tRNA ribosyltransferase-isomerase from Pseudomonas entomophila (strain L48).